A 510-amino-acid polypeptide reads, in one-letter code: Glycerol kinase (510 aa).

An ADP-binding site is contributed by Thr14. ATP contacts are provided by Thr14 and Thr15. Thr14 provides a ligand contact to sn-glycerol 3-phosphate. Residue Arg18 participates in ADP binding. Residues Arg84, Glu85, Tyr136, and Asp256 each coordinate sn-glycerol 3-phosphate. Positions 84, 85, 136, 256, and 257 each coordinate glycerol. 4 residues coordinate ADP: Thr278, Gly322, Gly422, and Asn426. Residues Thr278, Gly322, and Gly422 each contribute to the ATP site.

The protein belongs to the FGGY kinase family.

It carries out the reaction glycerol + ATP = sn-glycerol 3-phosphate + ADP + H(+). The protein operates within polyol metabolism; glycerol degradation via glycerol kinase pathway; sn-glycerol 3-phosphate from glycerol: step 1/1. Key enzyme in the regulation of glycerol uptake and metabolism. Catalyzes the phosphorylation of glycerol to yield sn-glycerol 3-phosphate. It also catalyzes the phosphorylation of dihydroxyacetone (DHA). Involved, together with the DHA kinase DhaKLM, in the metabolism of DHA. The polypeptide is Glycerol kinase (Haloferax volcanii (strain ATCC 29605 / DSM 3757 / JCM 8879 / NBRC 14742 / NCIMB 2012 / VKM B-1768 / DS2) (Halobacterium volcanii)).